A 278-amino-acid polypeptide reads, in one-letter code: Energy-coupling factor transporter ATP-binding protein EcfA1 (278 aa).

Residues 5 to 239 (LLLESVSYQY…QDKLEAAGID (235 aa)) enclose the ABC transporter domain. 39-46 (GPNGSGKS) serves as a coordination point for ATP.

The protein belongs to the ABC transporter superfamily. Energy-coupling factor EcfA family. Forms a stable energy-coupling factor (ECF) transporter complex composed of 2 membrane-embedded substrate-binding proteins (S component), 2 ATP-binding proteins (A component) and 2 transmembrane proteins (T component).

Its subcellular location is the cell membrane. In terms of biological role, ATP-binding (A) component of a common energy-coupling factor (ECF) ABC-transporter complex. Unlike classic ABC transporters this ECF transporter provides the energy necessary to transport a number of different substrates. This Halalkalibacterium halodurans (strain ATCC BAA-125 / DSM 18197 / FERM 7344 / JCM 9153 / C-125) (Bacillus halodurans) protein is Energy-coupling factor transporter ATP-binding protein EcfA1.